Here is a 119-residue protein sequence, read N- to C-terminus: Large ribosomal subunit protein bL20c (119 aa).

It belongs to the bacterial ribosomal protein bL20 family.

Its subcellular location is the plastid. It is found in the chloroplast. In terms of biological role, binds directly to 23S ribosomal RNA and is necessary for the in vitro assembly process of the 50S ribosomal subunit. It is not involved in the protein synthesizing functions of that subunit. This chain is Large ribosomal subunit protein bL20c, found in Nandina domestica (Heavenly bamboo).